The following is a 105-amino-acid chain: Urease subunit beta (105 aa).

Belongs to the urease beta subunit family. In terms of assembly, heterotrimer of UreA (gamma), UreB (beta) and UreC (alpha) subunits. Three heterotrimers associate to form the active enzyme.

Its subcellular location is the cytoplasm. It catalyses the reaction urea + 2 H2O + H(+) = hydrogencarbonate + 2 NH4(+). Its pathway is nitrogen metabolism; urea degradation; CO(2) and NH(3) from urea (urease route): step 1/1. The polypeptide is Urease subunit beta (Pseudomonas putida (strain ATCC 47054 / DSM 6125 / CFBP 8728 / NCIMB 11950 / KT2440)).